We begin with the raw amino-acid sequence, 752 residues long: Cytosolic phospholipase A2 (752 aa).

Positions 1–178 (MSFIDPYQHI…MKKLLGPKKS (178 aa)) are phospholipid binding. S2 bears the Phosphoserine mark. The C2 domain maps to 6–122 (PYQHIIVEHQ…KVGEKKEVPF (117 aa)). Ca(2+)-binding residues include D40, T41, D43, N65, D93, A94, and N95. A PLA2c domain is found at 140-740 (SCPDLRFSMA…SNVEARKFFN (601 aa)). The Nucleophile role is filled by S228. T268 bears the Phosphothreonine mark. Residues 427-457 (KHIVSNDSSDSDDEAQGPKGTENEDAEREYQ) are disordered. S434, S435, and S437 each carry phosphoserine. S505 carries the phosphoserine; by MAPK modification. Phosphoserine occurs at positions 511 and 515. K541 participates in a covalent cross-link: Glycyl lysine isopeptide (Lys-Gly) (interchain with G-Cter in SUMO2). Catalysis depends on D549, which acts as the Proton acceptor. A Glycyl lysine isopeptide (Lys-Gly) (interchain with G-Cter in SUMO2) cross-link involves residue K606. S727 and S729 each carry phosphoserine.

As to quaternary structure, interacts with KAT5. Phosphorylated at both Ser-505 and Ser-727 in response to mitogenic stimuli. As to expression, in brain tissue, expressed in low levels in olfactory mitral and granule cells, in hippocampal pyramidal cells and in dentate and cerebellar granule cells.

It is found in the cytoplasm. The protein localises to the golgi apparatus membrane. The protein resides in the nucleus envelope. It catalyses the reaction a 1,2-diacyl-sn-glycero-3-phosphocholine + H2O = a 1-acyl-sn-glycero-3-phosphocholine + a fatty acid + H(+). It carries out the reaction a 1-O-alkyl-2-acyl-sn-glycero-3-phosphocholine + H2O = a 1-O-alkyl-sn-glycero-3-phosphocholine + a fatty acid + H(+). The catalysed reaction is a 1-acyl-sn-glycero-3-phosphocholine + H2O = sn-glycerol 3-phosphocholine + a fatty acid + H(+). The enzyme catalyses 1-hexadecanoyl-2-(5Z,8Z,11Z,14Z-eicosatetraenoyl)-sn-glycero-3-phosphocholine + H2O = 1-hexadecanoyl-sn-glycero-3-phosphocholine + (5Z,8Z,11Z,14Z)-eicosatetraenoate + H(+). It catalyses the reaction 1,2-di-(5Z,8Z,11Z,14Z-eicosatetraenoyl)-sn-glycero-3-phosphocholine + H2O = 1-(5Z,8Z,11Z,14Z-eicosatetraenoyl)-sn-glycero-3-phosphocholine + (5Z,8Z,11Z,14Z)-eicosatetraenoate + H(+). It carries out the reaction 1-octadecanoyl-2-(5Z,8Z,11Z,14Z-eicosatetraenoyl)-sn-glycero-3-phosphocholine + H2O = 1-octadecanoyl-sn-glycero-3-phosphocholine + (5Z,8Z,11Z,14Z)-eicosatetraenoate + H(+). The catalysed reaction is 1-hexadecanoyl-2-(9Z,12Z-octadecadienoyl)-sn-glycero-3-phosphocholine + H2O = (9Z,12Z)-octadecadienoate + 1-hexadecanoyl-sn-glycero-3-phosphocholine + H(+). The enzyme catalyses 1-octadecanoyl-2-(9Z,12Z,15Z-octadecatrienoyl)-sn-glycero-3-phosphocholine + H2O = (9Z,12Z,15Z)-octadecatrienoate + 1-octadecanoyl-sn-glycero-3-phosphocholine + H(+). It catalyses the reaction 1-(5Z,8Z,11Z,14Z-eicosatetraenoyl)-2-hexadecanoyl-sn-glycero-3-phosphocholine + H2O = 1-(5Z,8Z,11Z,14Z-eicosatetraenoyl)-sn-glycero-3-phosphocholine + hexadecanoate + H(+). It carries out the reaction 1-O-hexadecyl-2-(5Z,8Z,11Z,14Z)-eicosatetraenoyl-sn-glycero-3-phosphocholine + H2O = 1-O-hexadecyl-sn-glycero-3-phosphocholine + (5Z,8Z,11Z,14Z)-eicosatetraenoate + H(+). The catalysed reaction is 1,2-di-(9Z-octadecenoyl)-sn-glycero-3-phospho-(1'-sn-glycerol) + H2O = 1-(9Z-octadecenoyl)-sn-glycero-3-phospho-(1'-sn-glycerol) + (9Z)-octadecenoate + H(+). The enzyme catalyses 1-octadecanoyl-2-(5Z,8Z,11Z,14Z-eicosatetraenoyl)-sn-glycero-3-phosphate + H2O = 1-octadecanoyl-sn-glycero-3-phosphate + (5Z,8Z,11Z,14Z)-eicosatetraenoate + H(+). It catalyses the reaction 1-hexadecanoyl-sn-glycero-3-phosphocholine + H2O = sn-glycerol 3-phosphocholine + hexadecanoate + H(+). It carries out the reaction 2-(prostaglandin E2)-sn-glycero-3-phosphoethanolamine + H2O = sn-glycero-3-phosphoethanolamine + prostaglandin E2 + H(+). The catalysed reaction is 2-[(15S)-hydroxy-(5Z,8Z,11Z,13E)-eicosatetraenoyl]-sn-glycero-3-phosphocholine + H2O = (15S)-hydroxy-(5Z,8Z,11Z,13E)-eicosatetraenoate + sn-glycerol 3-phosphocholine + H(+). The enzyme catalyses 2-[(15R)-hydroxy-(5Z,8Z,11Z,13E)-eicosatetraenoyl]-sn-glycero-3-phosphocholine + H2O = (15R)-hydroxy-(5Z,8Z,11Z,13E)-eicosatetraenoate + sn-glycerol 3-phosphocholine + H(+). It catalyses the reaction 2-(prostaglandin E2)-sn-glycero-3-phosphocholine + H2O = prostaglandin E2 + sn-glycerol 3-phosphocholine + H(+). It carries out the reaction 2-[(11R)-hydroxy-(5Z,8Z,12E,14Z)-eicosatetraenoyl]-sn-glycero-3-phosphocholine + H2O = (11R)-hydroxy-(5Z,8Z,12E,14Z)-eicosatetraenoate + sn-glycerol 3-phosphocholine + H(+). The catalysed reaction is 1-(5Z,8Z,11Z,14Z-eicosatetraenoyl)-2-O-hexadecyl-sn-glycero-3-phosphocholine + H2O = 2-O-hexadecyl-sn-glycero-3-phosphocholine + (5Z,8Z,11Z,14Z)-eicosatetraenoate + H(+). The enzyme catalyses 1-octadecanoyl-2-(5Z,8Z,11Z,14Z-eicosatetraenoyl)-sn-glycero-3-phosphocholine + glycerol = 1-(5Z,8Z,11Z,14Z-eicosatetraenoyl)-glycerol + 1-octadecanoyl-sn-glycero-3-phosphocholine. It catalyses the reaction 1-octadecanoyl-2-(9Z,12Z,15Z-octadecatrienoyl)-sn-glycero-3-phosphocholine + glycerol = 1-(9Z,12Z,15Z-octadecatrienoyl)-glycerol + 1-octadecanoyl-sn-glycero-3-phosphocholine. The protein operates within lipid metabolism; arachidonate metabolism. Its pathway is membrane lipid metabolism; glycerophospholipid metabolism. It participates in lipid metabolism; prostaglandin biosynthesis. It functions in the pathway lipid metabolism; leukotriene B4 biosynthesis. With respect to regulation, activated by cytosolic calcium, which is necessary for binding to membrane lipids. Activated by phosphorylation in response to mitogenic stimuli. Has primarily calcium-dependent phospholipase and lysophospholipase activities, with a major role in membrane lipid remodeling and biosynthesis of lipid mediators of the inflammatory response. Plays an important role in embryo implantation and parturition through its ability to trigger prostanoid production. Preferentially hydrolyzes the ester bond of the fatty acyl group attached at sn-2 position of phospholipids (phospholipase A2 activity). Selectively hydrolyzes sn-2 arachidonoyl group from membrane phospholipids, providing the precursor for eicosanoid biosynthesis via the cyclooxygenase pathway. In an alternative pathway of eicosanoid biosynthesis, hydrolyzes sn-2 fatty acyl chain of eicosanoid lysophopholipids to release free bioactive eicosanoids. Hydrolyzes the ester bond of the fatty acyl group attached at sn-1 position of phospholipids (phospholipase A1 activity) only if an ether linkage rather than an ester linkage is present at the sn-2 position. This hydrolysis is not stereospecific. Has calcium-independent phospholipase A2 and lysophospholipase activities in the presence of phosphoinositides. Has O-acyltransferase activity. Catalyzes the transfer of fatty acyl chains from phospholipids to a primary hydroxyl group of glycerol (sn-1 or sn-3), potentially contributing to monoacylglycerol synthesis. This chain is Cytosolic phospholipase A2 (Pla2g4a), found in Rattus norvegicus (Rat).